The chain runs to 319 residues: Olfactory receptor 8K1 (319 aa).

The Extracellular segment spans residues 1 to 31 (MNHVVKHNHTAVTKVTEFILMGITDNPGLQA). Asparagine 8 is a glycosylation site (N-linked (GlcNAc...) asparagine). A helical membrane pass occupies residues 32–52 (PLFGLFLIIYLVTVIGNLGMV). The Cytoplasmic segment spans residues 53 to 60 (ILTYLDSK). The chain crosses the membrane as a helical span at residues 61 to 81 (LHTPMYFFLRHLSITDLGYST). Residues 82–105 (VIAPKMLVNFIVHKNTISYNWYAT) lie on the Extracellular side of the membrane. A helical transmembrane segment spans residues 106–126 (QLAFFEIFIISELFILSAMAY). Topologically, residues 127–145 (DRYVAICKPLLYVIIMAEK) are cytoplasmic. Residues 146-166 (VLWVLVIVPYLYSTFVSLFLT) form a helical membrane-spanning segment. At 167 to 203 (IKLFKLSFCGSNIISYFYCDCIPLMSILCSDTNELEL) the chain is on the extracellular side. A helical transmembrane segment spans residues 204 to 223 (IILIFSGCNLLFSLSIVLIS). At 224 to 243 (YMFILVAILRMNSRKGRYKA) the chain is on the cytoplasmic side. A helical membrane pass occupies residues 244–264 (FSTCSSHLTVVIMFYGTLLFI). The Extracellular portion of the chain corresponds to 265–277 (YLQPKSSHTLAID). The helical transmembrane segment at 278 to 298 (KMASVFYTLLIPMLNPLIYSL) threads the bilayer. Residues 299 to 319 (RNKEVKDALKRTLTNRFKIPI) lie on the Cytoplasmic side of the membrane.

The protein belongs to the G-protein coupled receptor 1 family.

The protein resides in the cell membrane. Odorant receptor. The polypeptide is Olfactory receptor 8K1 (OR8K1) (Homo sapiens (Human)).